The chain runs to 592 residues: Elongation factor 1 alpha-like protein (592 aa).

Disordered regions lie at residues 1 to 35 (MSRHRDVKNLDLDDYELDEEPGEEELTEEQEEEFR) and 78 to 159 (SSKA…KQNP). The segment covering 12–32 (LDDYELDEEPGEEELTEEQEE) has biased composition (acidic residues). The span at 82 to 111 (GAKEKQNTDSQKEKKQNKSKEALADAKDPL) shows a compositional bias: basic and acidic residues. Over residues 113-124 (ESSNGIKNLSLN) the composition is skewed to polar residues. A compositionally biased stretch (basic and acidic residues) spans 137-151 (VKMKNSSESDNQPEK). The 227-residue stretch at 175–401 (KPVVHLVVTG…DQLVPPEKPY (227 aa)) folds into the tr-type G domain. The segment at 184–191 (GHVDSGKS) is G1. 184 to 191 (GHVDSGKS) contributes to the GTP binding site. A G2 region spans residues 240 to 244 (GVTMD). The tract at residues 261-264 (DAPG) is G3. Residues 323 to 326 (NKLD) and 352 to 355 (FKTS) each bind GTP. The segment at 323–326 (NKLD) is G4. The segment at 363 to 365 (SAI) is G5.

The protein belongs to the TRAFAC class translation factor GTPase superfamily. Classic translation factor GTPase family. Component of the Dom34-Hbs1 complex, also named Pelota-HBS1L complex, composed of dom34 and hbs1.

The protein resides in the cytoplasm. The enzyme catalyses GTP + H2O = GDP + phosphate + H(+). GTPase component of the Dom34-Hbs1 complex, a complex that recognizes stalled ribosomes and triggers the No-Go Decay (NGD) pathway. The Dom34-Hbs1 complex recognizes ribosomes stalled at the 3' end of an mRNA and engages stalled ribosomes by destabilizing mRNA in the mRNA channel. Following ribosome-binding, the Pelota-HBS1L complex promotes the disassembly of stalled ribosomes, followed by degradation of damaged mRNAs as part of the NGD pathway. In Schizosaccharomyces pombe (strain 972 / ATCC 24843) (Fission yeast), this protein is Elongation factor 1 alpha-like protein.